We begin with the raw amino-acid sequence, 357 residues long: Membrane-bound lytic murein transglycosylase C (357 aa).

The signal sequence occupies residues 1 to 16; that stretch reads MKKILPLVIIAPLLIS. The N-palmitoyl cysteine moiety is linked to residue C17. Residue C17 is the site of S-diacylglycerol cysteine attachment.

This sequence belongs to the transglycosylase Slt family.

It is found in the cell outer membrane. The catalysed reaction is Exolytic cleavage of the (1-&gt;4)-beta-glycosidic linkage between N-acetylmuramic acid (MurNAc) and N-acetylglucosamine (GlcNAc) residues in peptidoglycan, from either the reducing or the non-reducing ends of the peptidoglycan chains, with concomitant formation of a 1,6-anhydrobond in the MurNAc residue.. In terms of biological role, murein-degrading enzyme. May play a role in recycling of muropeptides during cell elongation and/or cell division. This Sodalis glossinidius (strain morsitans) protein is Membrane-bound lytic murein transglycosylase C.